Here is an 880-residue protein sequence, read N- to C-terminus: A-adding tRNA nucleotidyltransferase (880 aa).

CBS domains follow at residues 315 to 373 (MSSP…NLPV) and 377 to 435 (MHTE…RNAE). 487–490 (GFVR) provides a ligand contact to ATP. Mg(2+) contacts are provided by aspartate 500 and aspartate 502. ATP-binding positions include 574–575 (RD), asparagine 579, 619–628 (DPTRVFRAIR), arginine 632, and arginine 661.

The protein belongs to the tRNA nucleotidyltransferase/poly(A) polymerase family. Mg(2+) serves as cofactor.

The catalysed reaction is a tRNA with a 3' CC end + ATP = a tRNA with a 3' CCA end + diphosphate. TRNA nucleotidyltransferase involved in the synthesis of the tRNA CCA terminus. Adds the terminal adenosine residue to tRNA. The sequence is that of A-adding tRNA nucleotidyltransferase from Geobacter sulfurreducens (strain ATCC 51573 / DSM 12127 / PCA).